Reading from the N-terminus, the 337-residue chain is Annexin E1 (337 aa).

Annexin repeat units follow at residues 10–80 (TGVT…MLYK), 81–154 (PRAQ…AVAT), 161–238 (DTHE…LAHD), and 242–312 (DPCC…LLWE).

Belongs to the annexin family.

It is found in the cell projection. The protein resides in the cilium. Its subcellular location is the flagellum. In terms of biological role, may function as a calcium-regulated structural element linking phospholipid bilayer and underlying axoneme. The chain is Annexin E1 (ANXE1) from Giardia intestinalis (Giardia lamblia).